The following is a 92-amino-acid chain: MNVEEEIQKLEEEIHRLGSLQSDGSYKVTFGVLFNDDRCANIFEALVGTLRAAKKRKIVAFPGELLLQGVHDKVEITLRPPPPPPQAVAATS.

Methionine 1 carries the post-translational modification N-acetylmethionine.

This sequence belongs to the costars family.

This chain is Costars family protein ST45-2, found in Eutrema halophilum (Salt cress).